Consider the following 423-residue polypeptide: Gamma-glutamyl phosphate reductase (423 aa).

Belongs to the gamma-glutamyl phosphate reductase family.

It localises to the cytoplasm. The enzyme catalyses L-glutamate 5-semialdehyde + phosphate + NADP(+) = L-glutamyl 5-phosphate + NADPH + H(+). It functions in the pathway amino-acid biosynthesis; L-proline biosynthesis; L-glutamate 5-semialdehyde from L-glutamate: step 2/2. Functionally, catalyzes the NADPH-dependent reduction of L-glutamate 5-phosphate into L-glutamate 5-semialdehyde and phosphate. The product spontaneously undergoes cyclization to form 1-pyrroline-5-carboxylate. In Pseudomonas putida (strain ATCC 700007 / DSM 6899 / JCM 31910 / BCRC 17059 / LMG 24140 / F1), this protein is Gamma-glutamyl phosphate reductase.